The chain runs to 108 residues: MAVSLLLRGGRIRALKAALLEAKVFRGELASTVPLSTESENNKKAAGPTSKTESVFKEPTLVPESSDTTTYKNLQHHEYNAFTFLDLNLDLSKFRLPQPSSGRESPRH.

A mitochondrion-targeting transit peptide spans Met1–Leu35. A disordered region spans residues Thr32–Asp67. Ser105 is modified (phosphoserine).

It belongs to the complex I NDUFV3 subunit family. Complex I is composed of 45 different subunits. This is a component of the flavoprotein-sulfur (FP) fragment of the enzyme.

The protein localises to the mitochondrion inner membrane. Functionally, accessory subunit of the mitochondrial membrane respiratory chain NADH dehydrogenase (Complex I), that is believed not to be involved in catalysis. Complex I functions in the transfer of electrons from NADH to the respiratory chain. The immediate electron acceptor for the enzyme is believed to be ubiquinone. May be the terminally assembled subunit of Complex I. In Rattus norvegicus (Rat), this protein is NADH dehydrogenase [ubiquinone] flavoprotein 3, mitochondrial (Ndufv3).